We begin with the raw amino-acid sequence, 255 residues long: Reaction center protein L chain (255 aa).

A run of 3 helical transmembrane segments spans residues 11–33, 61–89, and 94–116; these read FFGV…GAAL, GGLW…SRKL, and HVPA…RPLL. (7R,8Z)-bacteriochlorophyll b contacts are provided by histidine 131 and histidine 151. Residues 149 to 176 traverse the membrane as a helical segment; that stretch reads PMHMVAVTLFFTTTLALALHGSLVLAAI. Histidine 168 is a Fe cation binding site. Phenylalanine 194 provides a ligand contact to a ubiquinone. Residues 203–228 form a helical membrane-spanning segment; it reads GTLGIHRLGLFLALGAGFASATCILL. Position 208 (histidine 208) interacts with Fe cation.

The protein belongs to the reaction center PufL/M/PsbA/D family. As to quaternary structure, reaction center is composed of four bacteriochlorophylls, two bacteriopheophytins, two ubiquinones, one iron, and two highly hydrophobic polypeptide chains (designated L and M).

It is found in the cell inner membrane. The reaction center is a membrane-bound complex that mediates the initial photochemical event in the electron transfer process of photosynthesis. The polypeptide is Reaction center protein L chain (pufL) (Acidiphilium multivorum).